Reading from the N-terminus, the 475-residue chain is MHFETVIGLEVHVELKTDSKMFSPSPAHFGAEPNSNTNVIDLAYPGVLPVVNRRAVDWAMRASMALNMEIATESKFDRKNYFYPDNPKAYQISQFDQPIGEHGYIDIEVDGETKRIGITRLHMEEDAGKSTHKDGYSLVDLNRQGTPLIEIVSEPDIRSPQEAYAYLEKLRSIIQYTGVSDCKMEEGSLRCDANISLRPYGQEEFGTKAELKNLNSFNYVRKGLEYEEKRQEEELLNGGEVLQETRRFDESTGKTILMRVKEGSDDYRYFPEPDIVPLYVDEAWKERVRQTIPELPDARKEKYVNEYGLPAYDAHVLTLTKEMSDFFEGAVEAGADVKLTSNWLMGGVNEYLNKNQVELQDTKLTPENLAGMIKLIEDGTMSSKIAKKVFPELAENGGDAKQIMEDKGLVQISDESVLLNFVNEALDNNPQSVEDFKNGKGRAKGFLVGQIMKASKGQANPQMVNKLLQQELDKR.

Belongs to the GatB/GatE family. GatB subfamily. As to quaternary structure, heterotrimer of A, B and C subunits.

It catalyses the reaction L-glutamyl-tRNA(Gln) + L-glutamine + ATP + H2O = L-glutaminyl-tRNA(Gln) + L-glutamate + ADP + phosphate + H(+). It carries out the reaction L-aspartyl-tRNA(Asn) + L-glutamine + ATP + H2O = L-asparaginyl-tRNA(Asn) + L-glutamate + ADP + phosphate + 2 H(+). Functionally, allows the formation of correctly charged Asn-tRNA(Asn) or Gln-tRNA(Gln) through the transamidation of misacylated Asp-tRNA(Asn) or Glu-tRNA(Gln) in organisms which lack either or both of asparaginyl-tRNA or glutaminyl-tRNA synthetases. The reaction takes place in the presence of glutamine and ATP through an activated phospho-Asp-tRNA(Asn) or phospho-Glu-tRNA(Gln). In Staphylococcus carnosus (strain TM300), this protein is Aspartyl/glutamyl-tRNA(Asn/Gln) amidotransferase subunit B.